We begin with the raw amino-acid sequence, 424 residues long: Histidinol dehydrogenase (424 aa).

NAD(+) contacts are provided by Y124, Q186, and N209. Substrate contacts are provided by S232, Q254, and H257. Positions 254 and 257 each coordinate Zn(2+). Catalysis depends on proton acceptor residues E322 and H323. The substrate site is built by H323, D356, E410, and H415. D356 is a binding site for Zn(2+). Residue H415 coordinates Zn(2+).

It belongs to the histidinol dehydrogenase family. Zn(2+) is required as a cofactor.

It carries out the reaction L-histidinol + 2 NAD(+) + H2O = L-histidine + 2 NADH + 3 H(+). The protein operates within amino-acid biosynthesis; L-histidine biosynthesis; L-histidine from 5-phospho-alpha-D-ribose 1-diphosphate: step 9/9. Its function is as follows. Catalyzes the sequential NAD-dependent oxidations of L-histidinol to L-histidinaldehyde and then to L-histidine. The sequence is that of Histidinol dehydrogenase from Moorella thermoacetica (strain ATCC 39073 / JCM 9320).